Reading from the N-terminus, the 500-residue chain is Keratin, type II cuticular Hb1 (500 aa).

The segment at 1 to 106 (MTCGSGFRGR…PNAQCVKQEE (106 aa)) is head. The IF rod domain occupies 106 to 417 (EKEQIKCLNN…RLLEGEEQRL (312 aa)). A coil 1A region spans residues 107–141 (KEQIKCLNNRFAAFIDKVRFLEQQNKLLETKLQFY). The tract at residues 142 to 151 (QNRQCCESNL) is linker 1. The coil 1B stretch occupies residues 152 to 252 (EPLFNGYIET…YEEEIRVLQA (101 aa)). A Glycyl lysine isopeptide (Lys-Gly) (interchain with G-Cter in SUMO1) cross-link involves residue K212. The linker 12 stretch occupies residues 253 to 269 (HISDTSVIVKMDNSRDL). The coil 2 stretch occupies residues 270-413 (NMDNIVAEIK…ATYRRLLEGE (144 aa)). Residues 414–500 (EQRLCEGVGS…GSCASVCRKC (87 aa)) are tail.

Belongs to the intermediate filament family. Heterotetramer of two type I and two type II keratins.

The polypeptide is Keratin, type II cuticular Hb1 (Bos taurus (Bovine)).